The sequence spans 380 residues: Queuine tRNA-ribosyltransferase (380 aa).

Residue Asp96 is the Proton acceptor of the active site. Substrate-binding positions include 96-100 (DSGGF), Asp150, Gln193, and Gly220. Residues 251–257 (GVGAPDS) form an RNA binding region. Asp270 functions as the Nucleophile in the catalytic mechanism. The RNA binding; important for wobble base 34 recognition stretch occupies residues 275–279 (TRIAR). Zn(2+) is bound by residues Cys308, Cys310, Cys313, and His339.

This sequence belongs to the queuine tRNA-ribosyltransferase family. As to quaternary structure, homodimer. Within each dimer, one monomer is responsible for RNA recognition and catalysis, while the other monomer binds to the replacement base PreQ1. It depends on Zn(2+) as a cofactor.

The catalysed reaction is 7-aminomethyl-7-carbaguanine + guanosine(34) in tRNA = 7-aminomethyl-7-carbaguanosine(34) in tRNA + guanine. It functions in the pathway tRNA modification; tRNA-queuosine biosynthesis. In terms of biological role, catalyzes the base-exchange of a guanine (G) residue with the queuine precursor 7-aminomethyl-7-deazaguanine (PreQ1) at position 34 (anticodon wobble position) in tRNAs with GU(N) anticodons (tRNA-Asp, -Asn, -His and -Tyr). Catalysis occurs through a double-displacement mechanism. The nucleophile active site attacks the C1' of nucleotide 34 to detach the guanine base from the RNA, forming a covalent enzyme-RNA intermediate. The proton acceptor active site deprotonates the incoming PreQ1, allowing a nucleophilic attack on the C1' of the ribose to form the product. After dissociation, two additional enzymatic reactions on the tRNA convert PreQ1 to queuine (Q), resulting in the hypermodified nucleoside queuosine (7-(((4,5-cis-dihydroxy-2-cyclopenten-1-yl)amino)methyl)-7-deazaguanosine). This Streptococcus pneumoniae (strain P1031) protein is Queuine tRNA-ribosyltransferase.